Reading from the N-terminus, the 364-residue chain is Dihydroorotate dehydrogenase (quinone) (364 aa).

FMN is bound by residues 61–65 and Thr85; that span reads AGYDK. A substrate-binding site is contributed by Lys65. 110–114 contributes to the substrate binding site; that stretch reads NRLGF. FMN-binding residues include Asn139 and Asn170. Asn170 contacts substrate. The active-site Nucleophile is Ser173. Residue Asn175 coordinates substrate. Lys215 and Ser243 together coordinate FMN. 244–245 is a substrate binding site; the sequence is NT. FMN-binding positions include Gly266, Gly295, and 316 to 317; that span reads YS.

It belongs to the dihydroorotate dehydrogenase family. Type 2 subfamily. In terms of assembly, monomer. The cofactor is FMN.

The protein resides in the cell membrane. The enzyme catalyses (S)-dihydroorotate + a quinone = orotate + a quinol. It functions in the pathway pyrimidine metabolism; UMP biosynthesis via de novo pathway; orotate from (S)-dihydroorotate (quinone route): step 1/1. In terms of biological role, catalyzes the conversion of dihydroorotate to orotate with quinone as electron acceptor. The sequence is that of Dihydroorotate dehydrogenase (quinone) from Brucella melitensis biotype 2 (strain ATCC 23457).